A 475-amino-acid polypeptide reads, in one-letter code: Serralysin G (475 aa).

Positions 1–14 (MALYGKKTDLSSAS) are excised as a propeptide. Residue His186 participates in Zn(2+) binding. Glu187 is a catalytic residue. 2 residues coordinate Zn(2+): His190 and Tyr226. Arg261, Gly263, Thr265, Asp293, Gly295, Gly296, Asp298, Glu337, Gly342, Gly344, Asp346, Asn351, Asn355, Gly359, Gly360, Ala361, Gly362, Asp364, Gly368, Gly370, Gly371, Asp373, Gly377, Gly378, Ala379, Gly380, Asp382, Asp391, Asp398, and Asp408 together coordinate Ca(2+). Hemolysin-type calcium-binding repeat units lie at residues 340–357 (IGGSGHDVIVGNLSDNRI) and 358–375 (DGGAGNDVLYGDGGADIL).

The protein belongs to the peptidase M10B family. Ca(2+) serves as cofactor. It depends on Zn(2+) as a cofactor.

It localises to the secreted. It catalyses the reaction Preferential cleavage of bonds with hydrophobic residues in P1'.. The sequence is that of Serralysin G (prtG) from Dickeya chrysanthemi (Pectobacterium chrysanthemi).